The primary structure comprises 68 residues: Serine rich endogenous peptide 13 (68 aa).

Positions 1–31 are cleaved as a signal peptide; sequence MATKASNLVVFLLSLLLLFLLISFQVGVADA. Residues 33–68 form a disordered region; it reads RNKRQGQEQRVDYDYPRPPTAPIYLPPSKSRKGKGP. Basic and acidic residues predominate over residues 37-47; the sequence is QGQEQRVDYDY. A compositionally biased stretch (pro residues) spans 48–57; that stretch reads PRPPTAPIYL. The SCOOP motif motif lies at 54-68; it reads PIYLPPSKSRKGKGP. Residues 60–62 carry the SxS motif essential for MIK2 binding motif; that stretch reads SKS.

The protein belongs to the serine rich endogenous peptide (SCOOP) phytocytokine family. Interacts with MIK2 (via extracellular leucine-rich repeat domain); this interaction triggers the formation of complex between MIK2 and the BAK1/SERK3 and SERK4 coreceptors, and subsequent BAK1 activation by phosphorylation. As to expression, mostly expressed in stems and flowers and, to a lower extent, in seedlings shoots, roots, siliques, seeds and leaves.

Its subcellular location is the cell membrane. It is found in the secreted. The protein resides in the extracellular space. It localises to the apoplast. Brassicaceae-specific phytocytokine (plant endogenous peptide released into the apoplast) perceived by MIK2 in a BAK1/SERK3 and SERK4 coreceptors-dependent manner, that modulates various physiological and antimicrobial processes including growth prevention and reactive oxygen species (ROS) response regulation. Promotes the expression of immune-related marker genes (e.g. WRKY30, WRKY33 and CYP81F2) in a MIK2-dependent manner. Inhibits root growth and regulates root meristems. Prevents general growth and development. Exhibits antibacterial effects against Pseudomonas syringae pv. tomato DC3000, Ralstonia solanacearum, Bacillus subtilis and Agrobacterium tumefaciens, thus being an antimicrobial peptide (AMP). This is Serine rich endogenous peptide 13 from Arabidopsis thaliana (Mouse-ear cress).